The chain runs to 399 residues: Nicotinate phosphoribosyltransferase 1 (399 aa).

His224 is modified (phosphohistidine; by autocatalysis).

This sequence belongs to the NAPRTase family. Post-translationally, transiently phosphorylated on a His residue during the reaction cycle. Phosphorylation strongly increases the affinity for substrates and increases the rate of nicotinate D-ribonucleotide production. Dephosphorylation regenerates the low-affinity form of the enzyme, leading to product release.

The catalysed reaction is nicotinate + 5-phospho-alpha-D-ribose 1-diphosphate + ATP + H2O = nicotinate beta-D-ribonucleotide + ADP + phosphate + diphosphate. The protein operates within cofactor biosynthesis; NAD(+) biosynthesis; nicotinate D-ribonucleotide from nicotinate: step 1/1. Functionally, catalyzes the synthesis of beta-nicotinate D-ribonucleotide from nicotinate and 5-phospho-D-ribose 1-phosphate at the expense of ATP. This chain is Nicotinate phosphoribosyltransferase 1, found in Pseudomonas aeruginosa (strain ATCC 15692 / DSM 22644 / CIP 104116 / JCM 14847 / LMG 12228 / 1C / PRS 101 / PAO1).